The sequence spans 438 residues: Probable phosphoglucosamine mutase (438 aa).

The active-site Phosphoserine intermediate is S91. S91, D228, D230, and D232 together coordinate Mg(2+). The residue at position 91 (S91) is a Phosphoserine.

This sequence belongs to the phosphohexose mutase family. Mg(2+) serves as cofactor. In terms of processing, activated by phosphorylation.

It catalyses the reaction alpha-D-glucosamine 1-phosphate = D-glucosamine 6-phosphate. Its function is as follows. Catalyzes the conversion of glucosamine-6-phosphate to glucosamine-1-phosphate. In Methanocella arvoryzae (strain DSM 22066 / NBRC 105507 / MRE50), this protein is Probable phosphoglucosamine mutase.